Reading from the N-terminus, the 312-residue chain is MNKIIILIALSLFSSSIWAGTSAHALSQQGYTQTRYPIVLVHGLFGFDTLAGMDYFHGIPQSLTRDGAQVYVAQVSATNSSERRGEQLLAQVESLLAVTGAKKVNLIGHSHGGPTIRYVASVRPDLVASVTSIGGVHKGSAVADLVRGVIPSGSVSEQVAVGLTQGLVALIDLLSGGKAHPQDPLASLAALTTEGSLKFNQYYPEGVPTSACGEGAYQVNGVRYYSWSGAATVTNILDPSDVAMGLIGLVFNEPNDGLVATCSTHLGKVIRDDYRMNHLDEINGLLGIHSLFETDPVTLYRQHANRLKQAGL.

An N-terminal signal peptide occupies residues 1–25; it reads MNKIIILIALSLFSSSIWAGTSAHA. An AB hydrolase-1 domain is found at 37–228; sequence PIVLVHGLFG…VNGVRYYSWS (192 aa). Leu44 provides a ligand contact to substrate. The active-site Nucleophile is Ser110. A substrate-binding site is contributed by His111. The cysteines at positions 212 and 262 are disulfide-linked. Residue Asp238 coordinates Ca(2+). Active-site charge relay system residues include Asp256 and His278. Ca(2+) is bound by residues Asp280, Gly284, and Ile288.

This sequence belongs to the AB hydrolase superfamily. Pseudomonas lipase family. Monomer. Ca(2+) is required as a cofactor.

Its subcellular location is the secreted. The enzyme catalyses a triacylglycerol + H2O = a diacylglycerol + a fatty acid + H(+). Functionally, catalyzes the hydrolysis of triacylglycerol. This is Triacylglycerol lipase from Vibrio cholerae serotype O1 (strain ATCC 39315 / El Tor Inaba N16961).